The sequence spans 212 residues: phospholipase A2 inhibitor and Ly6/PLAUR domain-containing protein (212 aa).

The first 24 residues, 1-24 (MILFRRHRTFLLAFTLLCTLLGLG), serve as a signal peptide directing secretion. Positions 27 to 117 (LTCEVCKGSG…NSGSVPPPLN (91 aa)) constitute a UPAR/Ly6 domain. 7 disulfides stabilise this stretch: Cys-29–Cys-53, Cys-32–Cys-39, Cys-46–Cys-74, Cys-80–Cys-101, Cys-102–Cys-107, Cys-126–Cys-152, and Cys-145–Cys-173.

Belongs to the CNF-like-inhibitor family.

It is found in the secreted. The chain is phospholipase A2 inhibitor and Ly6/PLAUR domain-containing protein (Pinlyp) from Mus musculus (Mouse).